A 426-amino-acid chain; its full sequence is 3-phosphoshikimate 1-carboxyvinyltransferase (426 aa).

Lys-22, Ser-23, and Arg-27 together coordinate 3-phosphoshikimate. A phosphoenolpyruvate-binding site is contributed by Lys-22. Positions 96 and 124 each coordinate phosphoenolpyruvate. The 3-phosphoshikimate site is built by Ser-170, Ser-171, Gln-172, Ser-198, Asp-314, Asn-337, and Lys-341. Gln-172 contributes to the phosphoenolpyruvate binding site. Asp-314 (proton acceptor) is an active-site residue. Phosphoenolpyruvate-binding residues include Arg-345, Arg-387, and Lys-412.

Belongs to the EPSP synthase family. Monomer.

It localises to the cytoplasm. The catalysed reaction is 3-phosphoshikimate + phosphoenolpyruvate = 5-O-(1-carboxyvinyl)-3-phosphoshikimate + phosphate. Its pathway is metabolic intermediate biosynthesis; chorismate biosynthesis; chorismate from D-erythrose 4-phosphate and phosphoenolpyruvate: step 6/7. In terms of biological role, catalyzes the transfer of the enolpyruvyl moiety of phosphoenolpyruvate (PEP) to the 5-hydroxyl of shikimate-3-phosphate (S3P) to produce enolpyruvyl shikimate-3-phosphate and inorganic phosphate. This Shewanella sediminis (strain HAW-EB3) protein is 3-phosphoshikimate 1-carboxyvinyltransferase.